The following is a 906-amino-acid chain: Protein kintoun (906 aa).

Serine 376 bears the Phosphoserine mark. 2 disordered regions span residues 614–691 (QQQK…RKQR) and 793–906 (RKKN…DEDM). Positions 618-631 (KLNKKQRKRNKKQR) are enriched in basic residues. Residues 639 to 655 (EELKAAQEELQLQHEKQ) are compositionally biased toward basic and acidic residues. The span at 793–808 (RKKNQKRRDCKLRAQQ) shows a compositional bias: basic residues. Phosphoserine is present on serine 812. The span at 837–850 (ANAQYFKQPNNNNG) shows a compositional bias: polar residues. 2 stretches are compositionally biased toward basic and acidic residues: residues 851–865 (HDQDKNKKLSMHDSG) and 875–887 (NNEEETKRNEADA). Acidic residues predominate over residues 894–906 (EMDDDDEDEDEDM).

The protein belongs to the PIH1 family. Kintoun subfamily. Interacts with Pp1alpha-96A, Pp1-87B, Pp1-13C and flw.

The protein localises to the cytoplasm. Required for cytoplasmic pre-assembly of axonemal dyneins, thereby playing a central role in motility in cilia and flagella. Involved in pre-assembly of dynein arm complexes in the cytoplasm before intraflagellar transport loads them for the ciliary compartment. The sequence is that of Protein kintoun from Drosophila virilis (Fruit fly).